An 81-amino-acid chain; its full sequence is MKTLLLTLVVVTIVCLDLGYTLKCNKLVPIASKTCPAGKNLCYKMFMMSDLTVPVKRGCIDVCPKSSLLVKYVCCNTDICN.

Positions 1–21 (MKTLLLTLVVVTIVCLDLGYT) are cleaved as a signal peptide. Intrachain disulfides connect cysteine 24/cysteine 42, cysteine 35/cysteine 59, cysteine 63/cysteine 74, and cysteine 75/cysteine 80.

This sequence belongs to the three-finger toxin family. Short-chain subfamily. Type IA cytotoxin sub-subfamily. As to quaternary structure, monomer in solution; Homodimer and oligomer in the presence of negatively charged lipids forming a pore with a size ranging between 20 and 30 Angstroms. As to expression, expressed by the venom gland.

The protein resides in the secreted. Its subcellular location is the target cell membrane. Functionally, shows cytolytic activity on many different cells by forming pore in lipid membranes. In vivo, increases heart rate or kills the animal by cardiac arrest. In addition, it binds to heparin with high affinity, interacts with Kv channel-interacting protein 1 (KCNIP1) in a calcium-independent manner, and binds to integrin alpha-V/beta-3 (ITGAV/ITGB3) with moderate affinity. This Naja atra (Chinese cobra) protein is Cytotoxin 1b.